A 199-amino-acid chain; its full sequence is Phosphatidylethanolamine N-methyltransferase (199 aa).

Over 1 to 12 (MTRLLGYVDPLD) the chain is Lumenal. Residues 13–33 (PSFVAAVITITFNPLYWNVVA) constitute an intramembrane region (helical). At 34–45 (RWEHKTRKLSRA) the chain is on the lumenal side. A helical membrane pass occupies residues 46–66 (FGSPYLACYSLSVTILLLNFL). The Cytoplasmic segment spans residues 67-93 (RSHCFTQAMLSQPRMESLDTPAAYSLG). The helical transmembrane segment at 94–114 (LALLGLGVVLVLSSFFALGFA) threads the bilayer. 98–100 (GLG) contributes to the S-adenosyl-L-methionine binding site. At 115–157 (GTFLGDYFGILKEARVTVFPFNILDNPMYWGSTANYLGWAIMH) the chain is on the lumenal side. Residues 158–178 (ASPTGLLLTVLVALTYIVALL) traverse the membrane as a helical segment. At 179–199 (YEEPFTAEIYRQKASGSHKRS) the chain is on the cytoplasmic side. 180-181 (EE) is an S-adenosyl-L-methionine binding site.

Belongs to the class VI-like SAM-binding methyltransferase superfamily. PEMT/PEM2 methyltransferase family. Post-translationally, isoform 2 is N-glycosylated with high-mannose oligosaccharides. Primarily expressed in liver (at protein level).

It localises to the endoplasmic reticulum. Its subcellular location is the endoplasmic reticulum membrane. The protein resides in the mitochondrion membrane. It carries out the reaction a 1,2-diacyl-sn-glycero-3-phospho-N-methylethanolamine + S-adenosyl-L-methionine = a 1,2-diacyl-sn-glycero-3-phospho-N,N-dimethylethanolamine + S-adenosyl-L-homocysteine + H(+). It catalyses the reaction a 1,2-diacyl-sn-glycero-3-phospho-N,N-dimethylethanolamine + S-adenosyl-L-methionine = a 1,2-diacyl-sn-glycero-3-phosphocholine + S-adenosyl-L-homocysteine + H(+). The enzyme catalyses a 1,2-diacyl-sn-glycero-3-phosphoethanolamine + S-adenosyl-L-methionine = a 1,2-diacyl-sn-glycero-3-phospho-N-methylethanolamine + S-adenosyl-L-homocysteine + H(+). The catalysed reaction is 1,2-di-(9Z-octadecenoyl)-sn-glycero-3-phosphoethanolamine + S-adenosyl-L-methionine = 1,2-di-(9Z-octadecenoyl)-sn-glycero-3-phospho-N-methylethanolamine + S-adenosyl-L-homocysteine + H(+). It carries out the reaction 1,2-di-(9Z-octadecenoyl)-sn-glycero-3-phospho-N-methylethanolamine + S-adenosyl-L-methionine = 1,2-di-(9Z-octadecenoyl)-sn-glycero-3-phospho-N,N-dimethylethanolamine + S-adenosyl-L-homocysteine + H(+). It catalyses the reaction 1,2-di-(9Z-octadecenoyl)-sn-glycero-3-phospho-N,N-dimethylethanolamine + S-adenosyl-L-methionine = 1,2-di-(9Z-octadecenoyl)-sn-glycero-3-phosphocholine + S-adenosyl-L-homocysteine + H(+). The enzyme catalyses 1,2-di-(9Z,12Z-octadecadienoyl)-sn-glycero-3-phosphoethanolamine + S-adenosyl-L-methionine = 1,2-di-(9Z,12Z-octadecadienoyl)-sn-glycero-3-phospho-N-methylethanolamine + S-adenosyl-L-homocysteine + H(+). The catalysed reaction is 1,2-di-(9Z,12Z-octadecadienoyl)-sn-glycero-3-phospho-N-methylethanolamine + S-adenosyl-L-methionine = 1,2-di-(9Z,12Z-octadecadienoyl)-sn-glycero-3-phospho-N,N-dimethylethanolamine + S-adenosyl-L-homocysteine + H(+). It carries out the reaction 1,2-di-(9Z,12Z-octadecadienoyl)-sn-glycero-3-phospho-N,N-dimethylethanolamine + S-adenosyl-L-methionine = 1,2-di-(9Z,12Z-octadecadienoyl)-sn-glycero-3-phosphocholine + S-adenosyl-L-homocysteine + H(+). It catalyses the reaction 1,2-di-(9Z,12Z,15Z-octadecatrienoyl)-sn-glycero-3-phosphoethanolamine + S-adenosyl-L-methionine = 1,2-di-(9Z,12Z,15Z-octadecatrienoyl)-sn-glycero-3-phospho-N-methylethanolamine + S-adenosyl-L-homocysteine + H(+). The enzyme catalyses 1,2-di-(9Z,12Z,15Z-octadecatrienoyl)-sn-glycero-3-phospho-N-methylethanolamine + S-adenosyl-L-methionine = 1,2-di-(9Z,12Z,15Z-octadecatrienoyl)-sn-glycero-3-phospho-N,N-dimethylethanolamine + S-adenosyl-L-homocysteine + H(+). The catalysed reaction is 1,2-di-(9Z,12Z,15Z-octadecatrienoyl)-sn-glycero-3-phospho-N,N-dimethylethanolamine + S-adenosyl-L-methionine = 1,2-di-(9Z,12Z,15Z-octadecatrienoyl)-sn-glycero-3-phosphocholine + S-adenosyl-L-homocysteine + H(+). It carries out the reaction 1-hexadecanoyl-2-(4Z,7Z,10Z,13Z,16Z,19Z-docosahexaenoyl)-sn-glycero-3-phosphoethanolamine + S-adenosyl-L-methionine = 1-hexadecanoyl-2-(4Z,7Z,10Z,13Z,16Z,19Z-docosahexaenoyl)-sn-glycero-3-phospho-N-methylethanolamine + S-adenosyl-L-homocysteine + H(+). It catalyses the reaction 1-hexadecanoyl-2-(4Z,7Z,10Z,13Z,16Z,19Z-docosahexaenoyl)-sn-glycero-3-phospho-N-methylethanolamine + S-adenosyl-L-methionine = 1-hexadecanoyl-2-(4Z,7Z,10Z,13Z,16Z,19Z-docosahexaenoyl)-sn-glycero-3-phospho-N,N-dimethylethanolamine + S-adenosyl-L-homocysteine + H(+). The enzyme catalyses 1-hexadecanoyl-2-(4Z,7Z,10Z,13Z,16Z,19Z-docosahexaenoyl)-sn-glycero-3-phospho-N,N-dimethylethanolamine + S-adenosyl-L-methionine = 1-hexadecanoyl-2-(4Z,7Z,10Z,13Z,16Z,19Z-docosahexaenoyl)-sn-glycero-3-phosphocholine + S-adenosyl-L-homocysteine + H(+). It functions in the pathway phospholipid metabolism; phosphatidylcholine biosynthesis. The first methylation is rate-limiting. In terms of biological role, catalyzes the three sequential steps of the methylation pathway for the biosynthesis of phosphatidylcholine, a critical and essential component for membrane structure. Uses S-adenosylmethionine (S-adenosyl-L-methionine, SAM or AdoMet) as the methyl group donor for the methylation of phosphatidylethanolamine (1,2-diacyl-sn-glycero-3-phosphoethanolamine, PE) to phosphatidylmonomethylethanolamine (1,2-diacyl-sn-glycero-3-phospho-N-methylethanolamine, PMME), PMME to phosphatidyldimethylethanolamine (1,2-diacyl-sn-glycero-3-phospho-N,N-dimethylethanolamine, PDME), and PDME to phosphatidylcholine (1,2-diacyl-sn-glycero-3-phosphocholine, PC), producing S-adenosyl-L-homocysteine in each step. Responsible for approximately 30% of hepatic PC with the CDP-choline pathway accounting for the other 70%. Its function is as follows. Catalyzes the three sequential steps of the methylation of 1,2-diacyl-sn-glycero-3-phospho-N-methylethanolamine (PMME) to 1,2-diacyl-sn-glycero-3-phospho-N,N-dimethylethanolamine (PDME) more efficiently than isoform 2. Induces increase in PC species with longer polyunsaturated chains than isoform 2. Produces a higher increase in the level of PC species containing long chains with three double bonds than isoform 1. The protein is Phosphatidylethanolamine N-methyltransferase of Homo sapiens (Human).